The chain runs to 11197 residues: Nonribosomal peptide synthetase 5 (11197 aa).

The adenylation (A) domain 1 stretch occupies residues 19–413; sequence AQRARKQPDA…DGTLQVVGHK (395 aa). The tract at residues 426 to 452 is disordered; the sequence is HASSSASSVGETPGVTGPISTPMGDSV. The tract at residues 690-897 is condensation (C) domain 1; sequence KQLRQFCQEQ…LMDESMKQQI (208 aa). The tract at residues 918–1310 is adenylation (A) domain 2; that stretch reads DAAQDYPDAP…GRHDGQLKVR (393 aa). Positions 1446-1522 constitute a Carrier 1 domain; sequence ADRSPVHMML…DMANNIAISE (77 aa). Ser-1483 is subject to O-(pantetheine 4'-phosphoryl)serine. The tract at residues 1952–2380 is condensation (C) domain 2; that stretch reads VEDVYPCSPV…SDISLMDPLS (429 aa). The segment at 2406–2805 is adenylation (A) domain 3; it reads VARIEPDKMA…QRKDTQIKIR (400 aa). Positions 2945 to 3021 constitute a Carrier 2 domain; it reads DSLTSTEVTI…SLAAFVDYDS (77 aa). Ser-2982 carries the post-translational modification O-(pantetheine 4'-phosphoryl)serine. Residues 3041–3481 are epimerase (E) domain 1; the sequence is EESFALSPIQ…TSTMKSEFTL (441 aa). The condensation (C) domain 3 stretch occupies residues 3515–3957; the sequence is EEIFPCSPMQ…VSPETRCELD (443 aa). The adenylation (A) domain 4 stretch occupies residues 3976-4371; it reads FEQQVEKIPD…RRRDNQVKVR (396 aa). A Carrier 3 domain is found at 4508–4584; the sequence is RKLTPMEQQL…ELANHARFKA (77 aa). O-(pantetheine 4'-phosphoryl)serine is present on Ser-4545. Residues 4603-5022 form an epimerase (E) domain 2 region; sequence FPLLPIQRMF…LNEYTAALRS (420 aa). The tract at residues 5069-5501 is condensation (C) domain 4; it reads ESIYPCSPLQ…LVGDSERQGL (433 aa). Positions 5521 to 5918 are adenylation (A) domain 5; sequence EAQVKAIPDN…RRKDTQVKVR (398 aa). The Carrier 4 domain maps to 6068-6141; the sequence is SEAEDIIRAV…ALAQFVSQST (74 aa). Ser-6102 carries the post-translational modification O-(pantetheine 4'-phosphoryl)serine. An epimerase (E) domain 3 region spans residues 6162–6512; sequence FSLSPIQQMF…MEILFNYFGQ (351 aa). The tract at residues 6636–7076 is condensation (C) domain 5; it reads EEIFPCSPIQ…LVGAETRREM (441 aa). Residues 7097-7491 are adenylation (A) domain 6; it reads ERNSQAMPDR…RRRDNQVKVR (395 aa). Residues 7636–7712 form the Carrier 5 domain; that stretch reads KPKTKMEEHF…DLAGRSRFKN (77 aa). Ser-7673 is subject to O-(pantetheine 4'-phosphoryl)serine. Residues 7733–8162 form an epimerase (E) domain 4 region; that stretch reads ALLPIQRLFF…KYMLETLASQ (430 aa). The condensation (C) domain 6 stretch occupies residues 8205-8638; sequence EASYPCSPLQ…MLGDSGRKRI (434 aa). Residues 8660 to 8832 are adenylation (A) domain 7; it reads EAHVKESPNR…DHRATATEIV (173 aa). In terms of domain architecture, Carrier 6 spans 9173–9248; the sequence is SAQTAVVQII…AMAAKAQQIG (76 aa). Ser-9209 carries the O-(pantetheine 4'-phosphoryl)serine modification. Positions 9565–9683 are epimerase (E) domain 5; the sequence is RVKDMRRAIP…LHEVVSALQK (119 aa). The tract at residues 9721-10116 is condensation (C) domain 7; sequence VEDVYPTSPM…LVPAKHMEQL (396 aa). The adenylation (A) domain 8 stretch occupies residues 10136–10529; sequence DDMVRSTPTA…VGRKDTQIKI (394 aa). One can recognise a Carrier 7 domain in the interval 10663 to 10749; it reads LDSSDYVAMQ…TLAVTIKADM (87 aa). Position 10708 is an O-(pantetheine 4'-phosphoryl)serine (Ser-10708). Residues 10806 to 11104 form a thioesterase (TE) domain region; the sequence is NFLVTGSTGF…SLRPMSGPEW (299 aa).

The protein belongs to the NRP synthetase family.

The protein operates within secondary metabolite biosynthesis. Nonribosomal peptide synthetase; part of the Fg3_54/C64 gene cluster that mediates the biosynthesis of the octapeptide fusaoctaxin A, a virulence factor that is required for cell-to-cell invasiveness of plant host. The 2 nonribosomal peptide synthetases NRPS9 and NRPS5 form an assembly line which likely utilizes GABA as a starter unit (loaded on the unique module M1 of NRPS9) and sequentially incorporates seven extender units composed of the residues L-Ala, L-allo-Ile, L-Ser, L-Val, L-Ser, L-Leu and L-Leu, respectively. During the process, each of the residues that are tethered on modules M3-M7 of NRPS5 containing an E domain can undergo an epimerization reaction to produce a D-configuration before the transpeptidation reaction occurs. The elongation of the peptidyl chain might be terminated by module M8-mediated L-Leu incorporation, followed by R domain-catalyzed 4 electron reduction to release the resulting octapeptide from the assembly line as an alcohol. Fusaoctaxin A is cleaved by the cluster specific ABC transporter FGM5 to the pentapeptide fusapentaxin A and the tripeptide fusatrixin A. The other enzymes from the cluster, FGM1, FGM2, FGM3 and FGM9 seem not to be involved in the biosynthesis of fusaoctaxin A and their functions have still to be determined. The chain is Nonribosomal peptide synthetase 5 from Gibberella zeae (strain ATCC MYA-4620 / CBS 123657 / FGSC 9075 / NRRL 31084 / PH-1) (Wheat head blight fungus).